The chain runs to 181 residues: Oligoribonuclease (181 aa).

The Exonuclease domain occupies 8 to 171 (LIWIDLEMTG…DDIRESVAEL (164 aa)). Y129 is an active-site residue.

The protein belongs to the oligoribonuclease family.

It is found in the cytoplasm. 3'-to-5' exoribonuclease specific for small oligoribonucleotides. This chain is Oligoribonuclease, found in Salmonella choleraesuis (strain SC-B67).